A 546-amino-acid chain; its full sequence is Probable protein kinase UbiB (546 aa).

The Protein kinase domain maps to 124-502; the sequence is DFDIKPLASA…QARQGQSRYL (379 aa). Residues 130–138 and K153 each bind ATP; that span reads LASASIAQV. The active-site Proton acceptor is the D288. The next 2 helical transmembrane spans lie at 499 to 519 and 521 to 541; these read SRYLLGIGATLLISGTLLLIS and VEADMVPAGLMAAGIVTWIIG.

The protein belongs to the ABC1 family. UbiB subfamily.

It localises to the cell inner membrane. Its pathway is cofactor biosynthesis; ubiquinone biosynthesis [regulation]. Functionally, is probably a protein kinase regulator of UbiI activity which is involved in aerobic coenzyme Q (ubiquinone) biosynthesis. This Pectobacterium carotovorum subsp. carotovorum (strain PC1) protein is Probable protein kinase UbiB.